A 405-amino-acid polypeptide reads, in one-letter code: Chorismate synthase (405 aa).

2 residues coordinate NADP(+): arginine 43 and arginine 49. FMN contacts are provided by residues 138–140 and 259–260; these read RAS and QA. The segment covering 275 to 286 has biased composition (basic and acidic residues); it reads RRGSQAHDEMRP. The tract at residues 275-308 is disordered; sequence RRGSQAHDEMRPGPDGVLRSTNRAGGLEGGMTNG. FMN is bound by residues glycine 303, 318 to 322, and arginine 344; that span reads KPIST.

The protein belongs to the chorismate synthase family. Homotetramer. FMNH2 is required as a cofactor.

The catalysed reaction is 5-O-(1-carboxyvinyl)-3-phosphoshikimate = chorismate + phosphate. It participates in metabolic intermediate biosynthesis; chorismate biosynthesis; chorismate from D-erythrose 4-phosphate and phosphoenolpyruvate: step 7/7. In terms of biological role, catalyzes the anti-1,4-elimination of the C-3 phosphate and the C-6 proR hydrogen from 5-enolpyruvylshikimate-3-phosphate (EPSP) to yield chorismate, which is the branch point compound that serves as the starting substrate for the three terminal pathways of aromatic amino acid biosynthesis. This reaction introduces a second double bond into the aromatic ring system. The polypeptide is Chorismate synthase (Nocardia farcinica (strain IFM 10152)).